Consider the following 654-residue polypeptide: NADPH-dependent diflavin oxidoreductase 1 (654 aa).

Residues 1–10 (MSGSQSSGSP) show a composition bias toward low complexity. A disordered region spans residues 1 to 22 (MSGSQSSGSPGSPGPPGPPGRS). Positions 23-167 (ALVVYGSETG…TFIPWLAGFR (145 aa)) constitute a Flavodoxin-like domain. FMN contacts are provided by residues 29–34 (SETGNA), 76–79 (STTG), and 114–123 (LGDSSYPKFN). The 251-residue stretch at 235–485 (HDSLTATLVQ…QLQRGGLNSS (251 aa)) folds into the FAD-binding FR-type domain. Residues R389, 419-422 (RQFS), and 458-461 (GVCT) each bind FAD. Residues T500, 568–569 (SR), and 574–578 (KVYVQ) each bind NADP(+). An FAD-binding site is contributed by W654.

This sequence belongs to the NADPH-dependent diflavin oxidoreductase NDOR1 family. In the N-terminal section; belongs to the flavodoxin family. The protein in the C-terminal section; belongs to the flavoprotein pyridine nucleotide cytochrome reductase family. In terms of assembly, interacts with dre2; as part of the cytosolic iron-sulfur (Fe-S) protein assembly (CIA) machinery. The cofactor is FAD. Requires FMN as cofactor.

Its subcellular location is the cytoplasm. It localises to the mitochondrion. It carries out the reaction 2 oxidized [2Fe-2S]-[protein] + NADPH = 2 reduced [2Fe-2S]-[protein] + NADP(+) + H(+). Functionally, NADPH-dependent reductase which is a central component of the cytosolic iron-sulfur (Fe-S) protein assembly (CIA) machinery. Transfers electrons from NADPH via its FAD and FMN prosthetic groups to the [2Fe-2S] cluster of dre2, another key component of the CIA machinery. In turn, this reduced cluster provides electrons for assembly of cytosolic iron-sulfur cluster proteins. Positively controls H(2)O(2)-induced cell death. The chain is NADPH-dependent diflavin oxidoreductase 1 from Emericella nidulans (strain FGSC A4 / ATCC 38163 / CBS 112.46 / NRRL 194 / M139) (Aspergillus nidulans).